Reading from the N-terminus, the 471-residue chain is UTP--glucose-1-phosphate uridylyltransferase (471 aa).

UTP-binding positions include 87-90 (LNGG), Lys101, Gln164, and Gly193. 89–90 (GG) is a substrate binding site. Residues His194 and 222–224 (NSD) each bind substrate. UTP-binding residues include Asp224 and Lys362.

Belongs to the UDPGP type 1 family.

The protein localises to the cytoplasm. It carries out the reaction alpha-D-glucose 1-phosphate + UTP + H(+) = UDP-alpha-D-glucose + diphosphate. Functionally, plays a central role as a glucosyl donor in cellular metabolic pathways. In Pyrus pyrifolia (Chinese pear), this protein is UTP--glucose-1-phosphate uridylyltransferase.